Reading from the N-terminus, the 558-residue chain is Phosphatidylserine lipase ABHD16A (558 aa).

2 helical membrane passes run 60 to 80 and 93 to 113; these read ILALASVFWSISYYSSPFAFF and VVPFSHYAGTLLLLLAGVACL. Topologically, residues 114 to 558 are cytoplasmic; it reads RGIGRWTNPQ…AQNFQMPWHL (445 aa). In terms of domain architecture, AB hydrolase-1 spans 281 to 407; the sequence is LVICCEGNAG…LVTRTVRQHL (127 aa). Residues S355, D430, and H507 each act as charge relay system in the active site.

This sequence belongs to the AB hydrolase superfamily. ABHD16 family.

It localises to the membrane. It carries out the reaction 1-heptadecanoyl-2-(5Z,8Z,11Z,14Z-eicosatetraenoyl)-sn-glycero-3-phosphoserine + H2O = 1-heptadecanoyl-sn-glycero-3-phosphoserine + (5Z,8Z,11Z,14Z)-eicosatetraenoate + H(+). The catalysed reaction is 1-hexadecanoyl-2-(9Z-octadecenoyl)-sn-glycero-3-phospho-L-serine + H2O = 1-hexadecanoyl-sn-glycero-3-phospho-L-serine + (9Z)-octadecenoate + H(+). It catalyses the reaction 1-octadecanoyl-2-(9Z,12Z-octadecadienoyl)-sn-glycero-3-phosphoserine + H2O = 1-octadecanoyl-sn-glycero-3-phosphoserine + (9Z,12Z)-octadecadienoate + H(+). The enzyme catalyses 1-heptadecanoyl-2-(5Z,8Z,11Z,14Z-eicosatetraenoyl)-sn-glycero-3-phosphocholine + H2O = 1-heptadecanoyl-sn-glycero-3-phosphocholine + (5Z,8Z,11Z,14Z)-eicosatetraenoate + H(+). It carries out the reaction 1-hexadecanoyl-2-(9Z-octadecenoyl)-sn-glycero-3-phosphoglycerol + H2O = 1-hexadecanoyl-sn-glycero-3-phosphoglycerol + (9Z)-octadecenoate + H(+). The catalysed reaction is 1-hexadecanoyl-2-(9Z-octadecenoyl)-sn-glycero-3-phospho-(1D-myo-inositol) + H2O = 1-hexadecanoyl-sn-glycero-3-phospho-(1D-myo-inositol) + (9Z)-octadecenoate + H(+). It catalyses the reaction 1-heptadecanoyl-2-(5Z,8Z,11Z,14Z-eicosatetraenoyl)-sn-glycero-3-phosphoethanolamine + H2O = 1-heptadecanoyl-sn-glycero-3-phosphoethanolamine + (5Z,8Z,11Z,14Z)-eicosatetraenoate + H(+). The enzyme catalyses 1-hexadecanoyl-2-(9Z-octadecenoyl)-sn-glycero-3-phospho-(1'-sn-glycerol) + H2O = 1-hexadecanoyl-sn-glycero-3-phospho-(1'-sn-glycerol) + (9Z)-octadecenoate + H(+). It carries out the reaction Hydrolyzes glycerol monoesters of long-chain fatty acids.. The catalysed reaction is 1-tetradecanoylglycerol + H2O = tetradecanoate + glycerol + H(+). It catalyses the reaction 2-hexadecanoylglycerol + H2O = glycerol + hexadecanoate + H(+). The enzyme catalyses 1-(9Z-octadecenoyl)-glycerol + H2O = glycerol + (9Z)-octadecenoate + H(+). It carries out the reaction 2-(9Z-octadecenoyl)-glycerol + H2O = glycerol + (9Z)-octadecenoate + H(+). The catalysed reaction is 2-(9Z,12Z-octadecadienoyl)-glycerol + H2O = (9Z,12Z)-octadecadienoate + glycerol + H(+). It catalyses the reaction 1-(5Z,8Z,11Z,14Z-eicosatetraenoyl)-glycerol + H2O = glycerol + (5Z,8Z,11Z,14Z)-eicosatetraenoate + H(+). The enzyme catalyses 2-(5Z,8Z,11Z,14Z-eicosatetraenoyl)-glycerol + H2O = glycerol + (5Z,8Z,11Z,14Z)-eicosatetraenoate + H(+). It carries out the reaction prostaglandin D2-1-glycerol ester + H2O = prostaglandin D2 + glycerol + H(+). The catalysed reaction is 2-glyceryl-15-deoxy-Delta(12,14)-prostaglandin J2 + H2O = 15-deoxy-Delta(12,14)-prostaglandin J2 + glycerol + H(+). It catalyses the reaction 1-(9Z,12Z-octadecadienoyl)-glycerol + H2O = (9Z,12Z)-octadecadienoate + glycerol + H(+). With respect to regulation, inhibited by beta-lactone-based lipid inhibitors, such as beta-lactone palmostatin-B. In terms of biological role, phosphatidylserine (PS) lipase that mediates the hydrolysis of phosphatidylserine to generate lysophosphatidylserine (LPS). LPS constitutes a class of signaling lipids that regulates immunological and neurological processes. Has no activity towards diacylglycerol, triacylglycerol or lysophosphatidylserine lipase. Also has monoacylglycerol lipase activity, with preference for 1-(9Z,12Z-octadecadienoyl)-glycerol (1-LG) and 2-glyceryl-15-deoxy-Delta(12,14)-prostaglandin J2 (15d-PGJ(2)-G). The sequence is that of Phosphatidylserine lipase ABHD16A from Homo sapiens (Human).